Reading from the N-terminus, the 511-residue chain is Probable eukaryotic translation initiation factor 4H (511 aa).

Disordered stretches follow at residues 25–63 and 154–511; these read SWADDDFDLPTAPAAREESGSGLKRGDPGYFESLPDRGS and TIRV…EVKI. Over residues 39-51 the composition is skewed to basic and acidic residues; the sequence is AREESGSGLKRGD. An RRM domain is found at 86-162; that stretch reads FTAFIGNLSF…RTIRVNVAEA (77 aa). Residues 179-196 are compositionally biased toward polar residues; it reads WRRSTPLASRESSSQPSR. 2 stretches are compositionally biased toward basic and acidic residues: residues 230–247 and 261–270; these read VRRDSSGPGHTREPRDPG and LAEKVDRDVP. Over residues 285–318 the composition is skewed to polar residues; it reads LADTEQTWSRGTKLRTPTTTSRQSSADSTPSSGA. The span at 331–349 shows a compositional bias: low complexity; the sequence is TAGSPSATANATPAAPASG. Ser-334 is subject to Phosphoserine. Basic and acidic residues-rich tracts occupy residues 360-388 and 394-419; these read AAREKAAEEKLAQREGERRKAREEAEKQK and KPVEGEKLGWREEKLRSIKAAQDKVA. Low complexity predominate over residues 420 to 434; sequence GKPTTAPATTTNTGA. The span at 438-448 shows a compositional bias: basic and acidic residues; that stretch reads GSADRAKKDEQ. The span at 451 to 467 shows a compositional bias: polar residues; that stretch reads EQVQPSRKSSQTGATSE. Residues 502-511 are compositionally biased toward basic and acidic residues; that stretch reads VTKGVEEVKI.

Its subcellular location is the cytoplasm. It localises to the P-body. Functionally, probable translation initiation factor. The chain is Probable eukaryotic translation initiation factor 4H from Cryptococcus neoformans var. grubii serotype A (strain H99 / ATCC 208821 / CBS 10515 / FGSC 9487) (Filobasidiella neoformans var. grubii).